The following is a 370-amino-acid chain: Coiled-coil domain-containing protein 89 (370 aa).

Positions 1-38 (MPQEESAPRMDTPSSEEPLDKQNRKLEDQEEEMGFKEL) are disordered. Residue Thr-12 is modified to Phosphothreonine. Basic and acidic residues predominate over residues 18–38 (PLDKQNRKLEDQEEEMGFKEL). Positions 19-346 (LDKQNRKLED…YDELRLQSEA (328 aa)) form a coiled coil.

The protein belongs to the CCDC89 family. In terms of assembly, interacts with HEY1.

The protein localises to the cytoplasm. The protein resides in the nucleus. The polypeptide is Coiled-coil domain-containing protein 89 (Bos taurus (Bovine)).